The following is a 250-amino-acid chain: DNA repair protein RecO (250 aa).

This sequence belongs to the RecO family.

Functionally, involved in DNA repair and RecF pathway recombination. The protein is DNA repair protein RecO of Syntrophobacter fumaroxidans (strain DSM 10017 / MPOB).